Here is a 622-residue protein sequence, read N- to C-terminus: Mitochondrial distribution and morphology protein 34 (622 aa).

In terms of domain architecture, SMP-LTD spans 1 to 204 (MSFKVNWNSL…LPTLIHQLSL (204 aa)). Disordered stretches follow at residues 362 to 399 (YSNK…PSEL) and 568 to 592 (FDGG…TRNE). The span at 370–384 (KPKRRRIKVHKKNKS) shows a compositional bias: basic residues. Residues 390-399 (TTTTSKPSEL) are compositionally biased toward polar residues. Low complexity predominate over residues 571 to 583 (GKNNNTNDNNSKN).

Belongs to the MDM34 family. As to quaternary structure, component of the ER-mitochondria encounter structure (ERMES) or MDM complex, composed of MMM1, MDM10, MDM12 and MDM34.

Its subcellular location is the mitochondrion outer membrane. Functionally, component of the ERMES/MDM complex, which serves as a molecular tether to connect the endoplasmic reticulum (ER) and mitochondria. Components of this complex are involved in the control of mitochondrial shape and protein biogenesis, and function in nonvesicular lipid trafficking between the ER and mitochondria. MDM34 is required for the interaction of the ER-resident membrane protein MMM1 and the outer mitochondrial membrane-resident beta-barrel protein MDM10. The chain is Mitochondrial distribution and morphology protein 34 from Candida dubliniensis (strain CD36 / ATCC MYA-646 / CBS 7987 / NCPF 3949 / NRRL Y-17841) (Yeast).